The following is a 132-amino-acid chain: MPTIQQLIRHGRSMKASKTASPALEKCPQKRGVCTRVYTTTPKKPNSALRKVARVRLSNKIEVTAYIPGEGHNLQEHSIVLIRGGRVKDLPGVRYHIVRGSLDTSGVADRKQSRSKYGAKVPKAGAAPAKKK.

D89 is subject to 3-methylthioaspartic acid. The segment at 102-132 (LDTSGVADRKQSRSKYGAKVPKAGAAPAKKK) is disordered. Residues 118–132 (GAKVPKAGAAPAKKK) are compositionally biased toward low complexity.

It belongs to the universal ribosomal protein uS12 family. Part of the 30S ribosomal subunit. Contacts proteins S8 and S17. May interact with IF1 in the 30S initiation complex.

In terms of biological role, with S4 and S5 plays an important role in translational accuracy. Functionally, interacts with and stabilizes bases of the 16S rRNA that are involved in tRNA selection in the A site and with the mRNA backbone. Located at the interface of the 30S and 50S subunits, it traverses the body of the 30S subunit contacting proteins on the other side and probably holding the rRNA structure together. The combined cluster of proteins S8, S12 and S17 appears to hold together the shoulder and platform of the 30S subunit. The sequence is that of Small ribosomal subunit protein uS12 from Chlorobaculum tepidum (strain ATCC 49652 / DSM 12025 / NBRC 103806 / TLS) (Chlorobium tepidum).